We begin with the raw amino-acid sequence, 227 residues long: Guanylate kinase (227 aa).

The Guanylate kinase-like domain occupies 21-199; sequence GNLFMVVAPS…ALAELECIVA (179 aa). 28–35 contacts ATP; the sequence is APSGAGKS.

This sequence belongs to the guanylate kinase family.

The protein localises to the cytoplasm. It carries out the reaction GMP + ATP = GDP + ADP. In terms of biological role, essential for recycling GMP and indirectly, cGMP. The protein is Guanylate kinase of Burkholderia orbicola (strain AU 1054).